We begin with the raw amino-acid sequence, 629 residues long: tRNA uridine 5-carboxymethylaminomethyl modification enzyme MnmG (629 aa).

FAD contacts are provided by residues 14 to 19 (GAGHAG), V126, and S181. Residue 273-287 (GPRYCPSIEDKVVRF) coordinates NAD(+). An FAD-binding site is contributed by Q370.

The protein belongs to the MnmG family. In terms of assembly, homodimer. Heterotetramer of two MnmE and two MnmG subunits. It depends on FAD as a cofactor.

It localises to the cytoplasm. NAD-binding protein involved in the addition of a carboxymethylaminomethyl (cmnm) group at the wobble position (U34) of certain tRNAs, forming tRNA-cmnm(5)s(2)U34. The sequence is that of tRNA uridine 5-carboxymethylaminomethyl modification enzyme MnmG from Bacillus thuringiensis (strain Al Hakam).